The sequence spans 272 residues: ATP phosphoribosyltransferase regulatory subunit (272 aa).

It belongs to the class-II aminoacyl-tRNA synthetase family. HisZ subfamily. As to quaternary structure, heteromultimer composed of HisG and HisZ subunits.

The protein localises to the cytoplasm. It participates in amino-acid biosynthesis; L-histidine biosynthesis; L-histidine from 5-phospho-alpha-D-ribose 1-diphosphate: step 1/9. Functionally, required for the first step of histidine biosynthesis. May allow the feedback regulation of ATP phosphoribosyltransferase activity by histidine. This chain is ATP phosphoribosyltransferase regulatory subunit, found in Staphylococcus aureus (strain bovine RF122 / ET3-1).